The chain runs to 1040 residues: Multidrug resistance protein MdtB (1040 aa).

Helical transmembrane passes span Leu-15 to Gly-37, Phe-345 to Leu-362, Ala-367 to Leu-389, Leu-396 to Asn-418, Gly-438 to Phe-460, Phe-472 to Met-494, His-535 to Ile-557, Val-867 to Ile-889, Leu-909 to Val-931, Ile-968 to Ala-990, and Met-1000 to Phe-1022.

Belongs to the resistance-nodulation-cell division (RND) (TC 2.A.6) family. MdtB subfamily. As to quaternary structure, part of a tripartite efflux system composed of MdtA, MdtB and MdtC. MdtB forms a heteromultimer with MdtC.

It is found in the cell inner membrane. The chain is Multidrug resistance protein MdtB from Salmonella typhi.